The primary structure comprises 528 residues: GMP synthase [glutamine-hydrolyzing] (528 aa).

The 192-residue stretch at 13–204 (SILILDFGSQ…VYSIAKCKAD (192 aa)) folds into the Glutamine amidotransferase type-1 domain. Cys90 acts as the Nucleophile in catalysis. Residues His178 and Glu180 contribute to the active site. The 199-residue stretch at 205 to 403 (WTTETFLEET…LGLPDEIIKR (199 aa)) folds into the GMPS ATP-PPase domain. 232–238 (SGGVDSS) is an ATP binding site.

As to quaternary structure, homodimer.

The enzyme catalyses XMP + L-glutamine + ATP + H2O = GMP + L-glutamate + AMP + diphosphate + 2 H(+). Its pathway is purine metabolism; GMP biosynthesis; GMP from XMP (L-Gln route): step 1/1. Functionally, catalyzes the synthesis of GMP from XMP. The sequence is that of GMP synthase [glutamine-hydrolyzing] from Prochlorococcus marinus subsp. pastoris (strain CCMP1986 / NIES-2087 / MED4).